The sequence spans 454 residues: NADP-specific glutamate dehydrogenase 1 (454 aa).

Serine 2 is modified (N-acetylserine). Lysine 110 is a catalytic residue. 174–203 (GVLTGKGLNWGGSLIRPEATGYGLVYYTQA) is a binding site for NAD(+). Residues lysine 325, lysine 371, and lysine 433 each participate in a glycyl lysine isopeptide (Lys-Gly) (interchain with G-Cter in ubiquitin) cross-link.

This sequence belongs to the Glu/Leu/Phe/Val dehydrogenases family. Homohexamer.

The catalysed reaction is L-glutamate + NADP(+) + H2O = 2-oxoglutarate + NH4(+) + NADPH + H(+). Its function is as follows. Catalyzes the incorporation of an ammonium ion into alpha-ketoglutarate to form L-glutamate, the major route of assimilation of ammonia into an organic form in yeast. This chain is NADP-specific glutamate dehydrogenase 1, found in Saccharomyces cerevisiae (strain ATCC 204508 / S288c) (Baker's yeast).